Here is an 89-residue protein sequence, read N- to C-terminus: UPF0213 protein LMOf2365_0181 (89 aa).

The region spanning 5–80 is the GIY-YIG domain; the sequence is SEHFFYVLKC…KKLSRKNKDA (76 aa).

The protein belongs to the UPF0213 family.

The polypeptide is UPF0213 protein LMOf2365_0181 (Listeria monocytogenes serotype 4b (strain F2365)).